The primary structure comprises 273 residues: Medium-wave-sensitive opsin 1 (273 aa).

Residues 1–5 are Extracellular-facing; the sequence is APRWV. The helical transmembrane segment at 6 to 30 threads the bilayer; sequence YHLTSAWMVFVVIASVFTNGLVLAA. At 31 to 42 the chain is on the cytoplasmic side; that stretch reads TMRFKKLRHPLN. Residues 43-68 traverse the membrane as a helical segment; that stretch reads WILVNLAIADLVETIIASTISVVNQM. Over 69-82 the chain is Extracellular; sequence YGYFVLGHPLCVVE. The cysteines at positions 79 and 156 are disulfide-linked. The helical transmembrane segment at 83 to 102 threads the bilayer; the sequence is GYTASLCGITGLWSLAIISW. Topologically, residues 103 to 121 are cytoplasmic; sequence ERWMVVCRPFGNVRFDAKL. A helical transmembrane segment spans residues 122 to 145; that stretch reads AIAGIAFSWIWAAVWTAPPIFGWS. Topologically, residues 146 to 171 are extracellular; that stretch reads RYWPHGLKTSCGPDVFSGSSYPGVQS. A helical transmembrane segment spans residues 172-199; that stretch reads YMIVLMITCCFIPLSVIVLCYLQVWLAI. Topologically, residues 200-221 are cytoplasmic; sequence RAVAKQQKESESTQKAEKEVTR. A helical transmembrane segment spans residues 222-245; it reads MVMVMIFAFCLCWGPYAFFACFAA. Residues 246–253 lie on the Extracellular side of the membrane; the sequence is AHPGYAFH. A helical membrane pass occupies residues 254–273; that stretch reads PLVAALPAYFAKSATIYNPI. Lys-265 is modified (N6-(retinylidene)lysine).

The protein belongs to the G-protein coupled receptor 1 family. Opsin subfamily. As to quaternary structure, monomer. Homodimer. Homotetramer. Post-translationally, O-glycosylated. In terms of processing, phosphorylated on some or all of the serine and threonine residues present in the C-terminal region. As to expression, the three color pigments are found in the cone photoreceptor cells.

It localises to the membrane. Functionally, visual pigments are the light-absorbing molecules that mediate vision. They consist of an apoprotein, opsin, covalently linked to cis-retinal. In Odocoileus virginianus virginianus (Virginia white-tailed deer), this protein is Medium-wave-sensitive opsin 1 (OPN1MW).